Consider the following 334-residue polypeptide: D-alanine--D-alanine ligase (334 aa).

An ATP-grasp domain is found at 121–327; the sequence is KLWYDALDIP…FSEFLVQCVT (207 aa). An ATP-binding site is contributed by 151–206; sequence AFGHWGSIFVKAARQGSSVGCYKVTTEDQIAPAIEAAFGFSEQVLVEQAVKPRELE. Residues Asp-281, Glu-294, and Asn-296 each coordinate Mg(2+).

This sequence belongs to the D-alanine--D-alanine ligase family. Mg(2+) is required as a cofactor. Mn(2+) serves as cofactor.

It localises to the cytoplasm. The enzyme catalyses 2 D-alanine + ATP = D-alanyl-D-alanine + ADP + phosphate + H(+). Its pathway is cell wall biogenesis; peptidoglycan biosynthesis. In terms of biological role, cell wall formation. This Vibrio cholerae serotype O1 (strain ATCC 39315 / El Tor Inaba N16961) protein is D-alanine--D-alanine ligase.